The chain runs to 336 residues: Protein-glutamate methylesterase/protein-glutamine glutaminase 1 (336 aa).

The 118-residue stretch at 2–119 folds into the Response regulatory domain; sequence KIAIVNDMPL…GNPQEAAAPL (118 aa). D53 is subject to 4-aspartylphosphate. Residues 147-336 form the CheB-type methylesterase domain; it reads TASRQRLVAI…APRLLEIFPK (190 aa). Active-site residues include S159, H186, and D279.

This sequence belongs to the CheB family. In terms of processing, phosphorylated by CheA. Phosphorylation of the N-terminal regulatory domain activates the methylesterase activity.

Its subcellular location is the cytoplasm. It carries out the reaction [protein]-L-glutamate 5-O-methyl ester + H2O = L-glutamyl-[protein] + methanol + H(+). It catalyses the reaction L-glutaminyl-[protein] + H2O = L-glutamyl-[protein] + NH4(+). Its function is as follows. Involved in chemotaxis. Part of a chemotaxis signal transduction system that modulates chemotaxis in response to various stimuli. Catalyzes the demethylation of specific methylglutamate residues introduced into the chemoreceptors (methyl-accepting chemotaxis proteins or MCP) by CheR. Also mediates the irreversible deamidation of specific glutamine residues to glutamic acid. The chain is Protein-glutamate methylesterase/protein-glutamine glutaminase 1 from Pseudomonas fluorescens (strain Pf0-1).